The following is a 101-amino-acid chain: Small ribosomal subunit protein uS14 (101 aa).

This sequence belongs to the universal ribosomal protein uS14 family. In terms of assembly, part of the 30S ribosomal subunit. Contacts proteins S3 and S10.

In terms of biological role, binds 16S rRNA, required for the assembly of 30S particles and may also be responsible for determining the conformation of the 16S rRNA at the A site. In Shewanella oneidensis (strain ATCC 700550 / JCM 31522 / CIP 106686 / LMG 19005 / NCIMB 14063 / MR-1), this protein is Small ribosomal subunit protein uS14.